The chain runs to 169 residues: Peptide deformylase (169 aa).

Residues Cys92 and His134 each coordinate Fe cation. The active site involves Glu135. A Fe cation-binding site is contributed by His138.

Belongs to the polypeptide deformylase family. Requires Fe(2+) as cofactor.

The catalysed reaction is N-terminal N-formyl-L-methionyl-[peptide] + H2O = N-terminal L-methionyl-[peptide] + formate. Its function is as follows. Removes the formyl group from the N-terminal Met of newly synthesized proteins. Requires at least a dipeptide for an efficient rate of reaction. N-terminal L-methionine is a prerequisite for activity but the enzyme has broad specificity at other positions. The sequence is that of Peptide deformylase from Cellvibrio japonicus (strain Ueda107) (Pseudomonas fluorescens subsp. cellulosa).